A 126-amino-acid chain; its full sequence is Protein ApaG (126 aa).

The region spanning A2–H126 is the ApaG domain.

The sequence is that of Protein ApaG from Chromobacterium violaceum (strain ATCC 12472 / DSM 30191 / JCM 1249 / CCUG 213 / NBRC 12614 / NCIMB 9131 / NCTC 9757 / MK).